A 330-amino-acid chain; its full sequence is Ketol-acid reductoisomerase (NADP(+)) (330 aa).

The region spanning 2 to 182 (VKVYYDADAN…GCTKAGVFET (181 aa)) is the KARI N-terminal Rossmann domain. NADP(+) is bound by residues 25-28 (YGSQ), arginine 48, serine 51, and 83-86 (DEIQ). The active site involves histidine 108. An NADP(+)-binding site is contributed by glycine 134. Residues 183–328 (SFREETETDL…ARLREMMPWL (146 aa)) enclose the KARI C-terminal knotted domain. The Mg(2+) site is built by aspartate 191, glutamate 195, glutamate 227, and glutamate 231. Serine 252 lines the substrate pocket.

Belongs to the ketol-acid reductoisomerase family. Requires Mg(2+) as cofactor.

It catalyses the reaction (2R)-2,3-dihydroxy-3-methylbutanoate + NADP(+) = (2S)-2-acetolactate + NADPH + H(+). The catalysed reaction is (2R,3R)-2,3-dihydroxy-3-methylpentanoate + NADP(+) = (S)-2-ethyl-2-hydroxy-3-oxobutanoate + NADPH + H(+). The protein operates within amino-acid biosynthesis; L-isoleucine biosynthesis; L-isoleucine from 2-oxobutanoate: step 2/4. It participates in amino-acid biosynthesis; L-valine biosynthesis; L-valine from pyruvate: step 2/4. Its function is as follows. Involved in the biosynthesis of branched-chain amino acids (BCAA). Catalyzes an alkyl-migration followed by a ketol-acid reduction of (S)-2-acetolactate (S2AL) to yield (R)-2,3-dihydroxy-isovalerate. In the isomerase reaction, S2AL is rearranged via a Mg-dependent methyl migration to produce 3-hydroxy-3-methyl-2-ketobutyrate (HMKB). In the reductase reaction, this 2-ketoacid undergoes a metal-dependent reduction by NADPH to yield (R)-2,3-dihydroxy-isovalerate. This is Ketol-acid reductoisomerase (NADP(+)) from Desulforamulus reducens (strain ATCC BAA-1160 / DSM 100696 / MI-1) (Desulfotomaculum reducens).